The chain runs to 177 residues: tRNA-splicing endonuclease (177 aa).

Catalysis depends on residues Tyr-114, His-123, and Lys-154.

The protein belongs to the tRNA-intron endonuclease family. Archaeal short subfamily. Homotetramer; although the tetramer contains four active sites, only two participate in the cleavage. Therefore, it should be considered as a dimer of dimers.

It carries out the reaction pretRNA = a 3'-half-tRNA molecule with a 5'-OH end + a 5'-half-tRNA molecule with a 2',3'-cyclic phosphate end + an intron with a 2',3'-cyclic phosphate and a 5'-hydroxyl terminus.. Its function is as follows. Endonuclease that removes tRNA introns. Cleaves pre-tRNA at the 5'- and 3'-splice sites to release the intron. The products are an intron and two tRNA half-molecules bearing 2',3' cyclic phosphate and 5'-OH termini. Recognizes a pseudosymmetric substrate in which 2 bulged loops of 3 bases are separated by a stem of 4 bp. This Methanococcus vannielii (strain ATCC 35089 / DSM 1224 / JCM 13029 / OCM 148 / SB) protein is tRNA-splicing endonuclease.